A 150-amino-acid polypeptide reads, in one-letter code: UPF0756 membrane protein PMI1560 (150 aa).

The next 4 membrane-spanning stretches (helical) occupy residues 16 to 36, 51 to 71, 82 to 102, and 123 to 143; these read GLGIISHNMTVTLAMIFLLVI, YGMTIGILILTIGVMTPIATG, FLNWKSLLAIAIGIIVSWLGA, and VIGVALFRGVPVGPLIAAGIL.

This sequence belongs to the UPF0756 family.

The protein localises to the cell membrane. The sequence is that of UPF0756 membrane protein PMI1560 from Proteus mirabilis (strain HI4320).